Consider the following 161-residue polypeptide: Ribosome maturation factor RimP (161 aa).

It belongs to the RimP family.

Its subcellular location is the cytoplasm. In terms of biological role, required for maturation of 30S ribosomal subunits. This is Ribosome maturation factor RimP from Desulfosudis oleivorans (strain DSM 6200 / JCM 39069 / Hxd3) (Desulfococcus oleovorans).